The sequence spans 131 residues: Methyl-coenzyme M reductase operon protein D (131 aa).

In terms of assembly, MCR is composed of three subunits: alpha, beta, and gamma. The function of proteins C and D is not known.

This Methanothermus fervidus protein is Methyl-coenzyme M reductase operon protein D (mcrD).